A 259-amino-acid polypeptide reads, in one-letter code: Type III pantothenate kinase (259 aa).

9 to 16 is a binding site for ATP; the sequence is DAGNSRIK. Substrate-binding positions include Y93 and 100–103; that span reads GSDR. D102 serves as the catalytic Proton acceptor. Residue T126 participates in ATP binding. Substrate is bound at residue T190.

This sequence belongs to the type III pantothenate kinase family. As to quaternary structure, homodimer. The cofactor is NH4(+). K(+) is required as a cofactor.

It is found in the cytoplasm. It carries out the reaction (R)-pantothenate + ATP = (R)-4'-phosphopantothenate + ADP + H(+). The protein operates within cofactor biosynthesis; coenzyme A biosynthesis; CoA from (R)-pantothenate: step 1/5. In terms of biological role, catalyzes the phosphorylation of pantothenate (Pan), the first step in CoA biosynthesis. This is Type III pantothenate kinase from Burkholderia thailandensis (strain ATCC 700388 / DSM 13276 / CCUG 48851 / CIP 106301 / E264).